The sequence spans 318 residues: Acetyl-coenzyme A carboxylase carboxyl transferase subunit alpha (318 aa).

The 251-residue stretch at 43–293 (RSQTALRDLY…GDGIAAALKS (251 aa)) folds into the CoA carboxyltransferase C-terminal domain.

The protein belongs to the AccA family. In terms of assembly, acetyl-CoA carboxylase is a heterohexamer composed of biotin carboxyl carrier protein (AccB), biotin carboxylase (AccC) and two subunits each of ACCase subunit alpha (AccA) and ACCase subunit beta (AccD).

Its subcellular location is the cytoplasm. It catalyses the reaction N(6)-carboxybiotinyl-L-lysyl-[protein] + acetyl-CoA = N(6)-biotinyl-L-lysyl-[protein] + malonyl-CoA. It participates in lipid metabolism; malonyl-CoA biosynthesis; malonyl-CoA from acetyl-CoA: step 1/1. Its function is as follows. Component of the acetyl coenzyme A carboxylase (ACC) complex. First, biotin carboxylase catalyzes the carboxylation of biotin on its carrier protein (BCCP) and then the CO(2) group is transferred by the carboxyltransferase to acetyl-CoA to form malonyl-CoA. The polypeptide is Acetyl-coenzyme A carboxylase carboxyl transferase subunit alpha (Bartonella bacilliformis (strain ATCC 35685 / KC583 / Herrer 020/F12,63)).